A 543-amino-acid polypeptide reads, in one-letter code: Reticulophagy regulator 2 (543 aa).

The next 3 helical transmembrane spans lie at 12–32 (AGGG…SLGM), 100–120 (SLRP…LDLW), and 204–224 (VPGI…PLVV). Over residues 254-265 (LHHKHDKRKRQG) the composition is skewed to basic residues. The tract at residues 254–287 (LHHKHDKRKRQGKNAPPGGDEPLAETESESEAEL) is disordered. Positions 275-285 (PLAETESESEA) are enriched in acidic residues. Thr-279 is modified (phosphothreonine). Phosphoserine occurs at positions 281, 283, 291, and 311. At Thr-334 the chain carries Phosphothreonine. 2 disordered regions span residues 336-394 (VSED…DVAA) and 411-486 (HFNG…EEEA). Phosphoserine is present on residues Ser-337, Ser-344, Ser-347, and Ser-385. Over residues 461-480 (APSPSILPPVPQDSPQPLPA) the composition is skewed to pro residues. The short motif at 490-495 (EDFELL) is the LIR motif element. Residues 504–543 (NAELGLEPETPPKPPDAPPLGPDIHSLVQSDQEAQAVAEP) are disordered. Residues 512-524 (ETPPKPPDAPPLG) are compositionally biased toward pro residues.

The protein belongs to the RETREG family. As to quaternary structure, interacts with ATG8 family modifier proteins MAP1LC3A, MAP1LC3B, MAP1LC3C, GABARAP, GABARAPL1 and GABARAPL2. Shows higher affinity for GABARAPL1 than for MAP1LC3B. Interacts with CANX.

It localises to the endoplasmic reticulum membrane. Functionally, endoplasmic reticulum (ER)-anchored autophagy regulator which exists in an inactive state under basal conditions but is activated following cellular stress. When activated, induces ER fragmentation and mediates ER delivery into lysosomes through sequestration into autophagosomes via interaction with ATG8 family proteins. Required for collagen quality control in a LIR motif-independent manner. The protein is Reticulophagy regulator 2 of Homo sapiens (Human).